The following is a 388-amino-acid chain: Deoxyuridine 5'-triphosphate nucleotidohydrolase (388 aa).

Residues 77 to 88 (EEKYDKEQHPGE) are compositionally biased toward basic and acidic residues. 2 disordered regions span residues 77–96 (EEKY…SPLP) and 336–388 (THTP…PRHP). Acidic residues predominate over residues 351–363 (VDDDVDETEEDEK).

It belongs to the dUTPase family. Requires Mg(2+) as cofactor.

It catalyses the reaction dUTP + H2O = dUMP + diphosphate + H(+). The protein operates within pyrimidine metabolism; dUMP biosynthesis; dUMP from dCTP (dUTP route): step 2/2. Functionally, involved in nucleotide metabolism: produces dUMP, the immediate precursor of thymidine nucleotides and decreases the intracellular concentration of dUTP to avoid uracil incorporation into viral DNA. The protein is Deoxyuridine 5'-triphosphate nucleotidohydrolase of Homo sapiens (Human).